Here is a 57-residue protein sequence, read N- to C-terminus: Ribulose bisphosphate carboxylase large chain (57 aa).

A propeptide spanning residues 1–2 (MS) is cleaved from the precursor. Residue Pro-3 is modified to N-acetylproline. At Lys-14 the chain carries N6,N6,N6-trimethyllysine.

Belongs to the RuBisCO large chain family. Type I subfamily. As to quaternary structure, heterohexadecamer of 8 large chains and 8 small chains.

It is found in the plastid. Its subcellular location is the chloroplast. The enzyme catalyses 2 (2R)-3-phosphoglycerate + 2 H(+) = D-ribulose 1,5-bisphosphate + CO2 + H2O. The catalysed reaction is D-ribulose 1,5-bisphosphate + O2 = 2-phosphoglycolate + (2R)-3-phosphoglycerate + 2 H(+). RuBisCO catalyzes two reactions: the carboxylation of D-ribulose 1,5-bisphosphate, the primary event in carbon dioxide fixation, as well as the oxidative fragmentation of the pentose substrate in the photorespiration process. Both reactions occur simultaneously and in competition at the same active site. This chain is Ribulose bisphosphate carboxylase large chain (rbcL), found in Camellia sinensis (Tea plant).